Consider the following 91-residue polypeptide: DNA-binding protein HU-beta 2 (91 aa).

This sequence belongs to the bacterial histone-like protein family.

In terms of biological role, histone-like DNA-binding protein which is capable of wrapping DNA to stabilize it, and thus to prevent its denaturation under extreme environmental conditions. The chain is DNA-binding protein HU-beta 2 (hupB2) from Neisseria meningitidis serogroup A / serotype 4A (strain DSM 15465 / Z2491).